The primary structure comprises 487 residues: Meiotic recombination protein SPO11-4 (487 aa).

Residues 1 to 56 (MDDSTDDDSYHPRKHYAYDRQVSSSRWRTSREYIRGPGPETHTTESAQDGQDPPAG) form a disordered region. Residues 119-252 (KSRVEARKTL…LGIIAAEKGI (134 aa)) form the Topo IIA-type catalytic domain. Tyrosine 213 (O-(5'-phospho-DNA)-tyrosine intermediate) is an active-site residue. The Mg(2+) site is built by glutamate 301 and aspartate 353.

It belongs to the TOP6A family. Homodimer. Interacts with TOP6B. Mg(2+) serves as cofactor.

The protein resides in the nucleus. The catalysed reaction is ATP-dependent breakage, passage and rejoining of double-stranded DNA.. In terms of biological role, required for meiotic recombination. Mediates DNA cleavage that forms the double-strand breaks (DSB) that initiate meiotic recombination. Possesses double-stranded DNA cleavage activity in vitro. The protein is Meiotic recombination protein SPO11-4 (SPO11-4) of Oryza sativa subsp. japonica (Rice).